Here is a 63-residue protein sequence, read N- to C-terminus: Metallothionein (63 aa).

The interval 1–30 is beta; sequence MDPQDCTCAAGDSCSCAGSCKCKNCRCRSC. 20 residues coordinate a divalent metal cation: Cys-6, Cys-8, Cys-14, Cys-16, Cys-20, Cys-22, Cys-25, Cys-27, Cys-30, Cys-34, Cys-35, Cys-37, Cys-38, Cys-42, Cys-45, Cys-49, Cys-51, Cys-59, Cys-61, and Cys-62. The segment at 31–63 is alpha; that stretch reads RKSCCSCCPAGCNNCAKGCVCKEPASSKCSCCH.

Belongs to the metallothionein superfamily. Type 1 family.

In terms of biological role, metallothioneins have a high content of cysteine residues that bind various heavy metals. This chain is Metallothionein, found in Anas platyrhynchos (Mallard).